Consider the following 298-residue polypeptide: Arginine/serine-rich protein 1 (298 aa).

A disordered region spans residues 1–135 (MSSAAMSKYV…SRSRSRGRSQ (135 aa)). S17 is modified (phosphoserine). Residues 23–36 (SPSTSGSGRSSRLS) show a composition bias toward low complexity. A compositionally biased stretch (basic residues) spans 60–105 (SRSHSRPRRSRRSRSRSRRRHQRKYRRYSRSYSRSRSRSRSHRYHR). Phosphoserine occurs at positions 118 and 120. Positions 124 to 135 (SRSRSRSRGRSQ) are enriched in basic residues. R145 is subject to Omega-N-methylarginine. 2 disordered regions span residues 161–181 (RPRW…TPFR) and 218–298 (ASQG…WIPV). The span at 219–228 (SQGTAVSSSG) shows a compositional bias: polar residues. Basic and acidic residues predominate over residues 230-246 (KVEHSEKQTEDATKNTS). The segment covering 247 to 271 (EKSSTQRNIAFSSNNSVAKPLQKTT) has biased composition (polar residues). Over residues 274–289 (AVEEKSSGSPKIDKKK) the composition is skewed to basic and acidic residues. S282 is modified (phosphoserine).

It belongs to the RSRP family. Phosphorylated. Phosphorylation at Ser-118 and Ser-120 mediates the interaction with spliceosome proteins.

It localises to the nucleus. Probably acts as a spliceosomal factor that contributes to spliceosome assembly and regulates the isoform switching of proteins such as PARP6. This Mus musculus (Mouse) protein is Arginine/serine-rich protein 1 (Rsrp1).